A 157-amino-acid polypeptide reads, in one-letter code: SsrA-binding protein (157 aa).

Residues 134–151 show a composition bias toward basic and acidic residues; the sequence is HDKRETEKKRDWSKEKGR. A disordered region spans residues 134-157; the sequence is HDKRETEKKRDWSKEKGRLMRAKG.

The protein belongs to the SmpB family.

Its subcellular location is the cytoplasm. In terms of biological role, required for rescue of stalled ribosomes mediated by trans-translation. Binds to transfer-messenger RNA (tmRNA), required for stable association of tmRNA with ribosomes. tmRNA and SmpB together mimic tRNA shape, replacing the anticodon stem-loop with SmpB. tmRNA is encoded by the ssrA gene; the 2 termini fold to resemble tRNA(Ala) and it encodes a 'tag peptide', a short internal open reading frame. During trans-translation Ala-aminoacylated tmRNA acts like a tRNA, entering the A-site of stalled ribosomes, displacing the stalled mRNA. The ribosome then switches to translate the ORF on the tmRNA; the nascent peptide is terminated with the 'tag peptide' encoded by the tmRNA and targeted for degradation. The ribosome is freed to recommence translation, which seems to be the essential function of trans-translation. The protein is SsrA-binding protein of Rhodopseudomonas palustris (strain BisA53).